Here is a 381-residue protein sequence, read N- to C-terminus: Succinyl-diaminopimelate desuccinylase (381 aa).

Residue H72 coordinates Zn(2+). Residue D74 is part of the active site. D105 lines the Zn(2+) pocket. The Proton acceptor role is filled by E139. Zn(2+)-binding residues include E140, E168, and H354.

This sequence belongs to the peptidase M20A family. DapE subfamily. In terms of assembly, homodimer. Zn(2+) is required as a cofactor. Requires Co(2+) as cofactor.

The catalysed reaction is N-succinyl-(2S,6S)-2,6-diaminopimelate + H2O = (2S,6S)-2,6-diaminopimelate + succinate. It participates in amino-acid biosynthesis; L-lysine biosynthesis via DAP pathway; LL-2,6-diaminopimelate from (S)-tetrahydrodipicolinate (succinylase route): step 3/3. Its function is as follows. Catalyzes the hydrolysis of N-succinyl-L,L-diaminopimelic acid (SDAP), forming succinate and LL-2,6-diaminopimelate (DAP), an intermediate involved in the bacterial biosynthesis of lysine and meso-diaminopimelic acid, an essential component of bacterial cell walls. This Shewanella sp. (strain MR-4) protein is Succinyl-diaminopimelate desuccinylase.